Here is a 189-residue protein sequence, read N- to C-terminus: Large ribosomal subunit protein eL18 (189 aa).

This sequence belongs to the eukaryotic ribosomal protein eL18 family.

The protein localises to the cytoplasm. In Anopheles gambiae (African malaria mosquito), this protein is Large ribosomal subunit protein eL18 (RpL18).